The sequence spans 372 residues: Cytochrome b (372 aa).

4 helical membrane passes run 25 to 45, 69 to 90, 105 to 125, and 170 to 190; these read FGSM…FLAI, WIMQ…YTHI, WLSG…GYVL, and FFAL…VHII. Heme b is bound by residues H75 and H89. Positions 174 and 188 each coordinate heme b. H193 serves as a coordination point for a ubiquinone. Transmembrane regions (helical) follow at residues 218–238, 280–300, 312–332, and 339–358; these read YKDM…LSFS, LGGT…PFTH, LSQI…WTAS, and FITI…ILTP.

It belongs to the cytochrome b family. As to quaternary structure, the cytochrome bc1 complex contains 3 respiratory subunits (MT-CYB, CYC1 and UQCRFS1), 2 core proteins (UQCRC1 and UQCRC2) and probably 6 low-molecular weight proteins. Heme b is required as a cofactor.

The protein resides in the mitochondrion inner membrane. In terms of biological role, component of the ubiquinol-cytochrome c reductase complex (complex III or cytochrome b-c1 complex) that is part of the mitochondrial respiratory chain. The b-c1 complex mediates electron transfer from ubiquinol to cytochrome c. Contributes to the generation of a proton gradient across the mitochondrial membrane that is then used for ATP synthesis. In Naja kaouthia (Monocled cobra), this protein is Cytochrome b (MT-CYB).